A 250-amino-acid chain; its full sequence is DNA polymerase sliding clamp (250 aa).

It belongs to the PCNA family. In terms of assembly, homotrimer. The subunits circularize to form a toroid; DNA passes through its center. Replication factor C (RFC) is required to load the toroid on the DNA.

In terms of biological role, sliding clamp subunit that acts as a moving platform for DNA processing. Responsible for tethering the catalytic subunit of DNA polymerase and other proteins to DNA during high-speed replication. In Methanococcus maripaludis (strain C6 / ATCC BAA-1332), this protein is DNA polymerase sliding clamp.